The chain runs to 541 residues: Tegument protein UL21 homolog (541 aa).

It belongs to the alphaherpesvirinae UL21 protein family. In terms of assembly, interacts (via C-terminus) with UL16.

It is found in the virion tegument. The protein resides in the host cytoplasm. Its subcellular location is the host nucleus. In terms of biological role, may participate in DNA packaging/capsid maturation events. Promotes efficient incorporation of tegument proteins UL46, UL49, and US3 homologs into virions. May also play a role in capsid transport to the trans-Golgi network (TGN). The chain is Tegument protein UL21 homolog from Varicella-zoster virus (strain Oka vaccine) (HHV-3).